Here is a 158-residue protein sequence, read N- to C-terminus: UPF0178 protein RPA2191 (158 aa).

This sequence belongs to the UPF0178 family.

This Rhodopseudomonas palustris (strain ATCC BAA-98 / CGA009) protein is UPF0178 protein RPA2191.